The chain runs to 100 residues: NADH-quinone oxidoreductase subunit K (100 aa).

A run of 3 helical transmembrane segments spans residues 1-21 (MIGLNHYLIVSGLLFCIGLAG), 28-48 (ILLLFFSTEIMLNAINIGFVA), and 64-84 (FIIAIAASEVAIGLGLVILWF).

It belongs to the complex I subunit 4L family. In terms of assembly, NDH-1 is composed of 14 different subunits. Subunits NuoA, H, J, K, L, M, N constitute the membrane sector of the complex.

The protein localises to the cell inner membrane. It carries out the reaction a quinone + NADH + 5 H(+)(in) = a quinol + NAD(+) + 4 H(+)(out). Its function is as follows. NDH-1 shuttles electrons from NADH, via FMN and iron-sulfur (Fe-S) centers, to quinones in the respiratory chain. The immediate electron acceptor for the enzyme in this species is believed to be ubiquinone. Couples the redox reaction to proton translocation (for every two electrons transferred, four hydrogen ions are translocated across the cytoplasmic membrane), and thus conserves the redox energy in a proton gradient. The chain is NADH-quinone oxidoreductase subunit K from Helicobacter pylori (strain B38).